The sequence spans 296 residues: NH(3)-dependent NAD(+) synthetase (296 aa).

30–37 (GVSGGLDS) serves as a coordination point for ATP. A Mg(2+)-binding site is contributed by aspartate 36. Arginine 157 contributes to the deamido-NAD(+) binding site. Glutamate 182 provides a ligand contact to Mg(2+). Positions 190 and 197 each coordinate deamido-NAD(+). ATP contacts are provided by lysine 206 and serine 228.

Belongs to the NAD synthetase family. Homodimer.

The enzyme catalyses deamido-NAD(+) + NH4(+) + ATP = AMP + diphosphate + NAD(+) + H(+). The protein operates within cofactor biosynthesis; NAD(+) biosynthesis; NAD(+) from deamido-NAD(+) (ammonia route): step 1/1. Catalyzes the ATP-dependent amidation of deamido-NAD to form NAD. Uses ammonia as a nitrogen source. This chain is NH(3)-dependent NAD(+) synthetase, found in Coprothermobacter proteolyticus (strain ATCC 35245 / DSM 5265 / OCM 4 / BT).